The sequence spans 262 residues: 14-3-3-like protein B (262 aa).

The protein belongs to the 14-3-3 family.

The polypeptide is 14-3-3-like protein B (Hordeum vulgare (Barley)).